Reading from the N-terminus, the 1038-residue chain is uncharacterized protein (1038 aa).

The span at 1–14 (MEENTAQKQSNATG) shows a compositional bias: polar residues. Residues 1-100 (MEENTAQKQS…QSENENYDFS (100 aa)) are disordered. The segment covering 58-71 (NPERELNSDGTDRI) has biased composition (basic and acidic residues). A compositionally biased stretch (acidic residues) spans 72 to 83 (IEEEEEEDDIEN). Phosphoserine is present on residues Ser112, Ser113, and Ser114. Disordered regions lie at residues 144–201 (GKDP…VKRR), 360–381 (ELDNTSEKATLETSSKPVTEQA), 422–441 (SHSNHSNEKFEQIPSPDEKL), 454–526 (QTTK…SGEL), and 556–575 (TNSEVETVTNDPSFSQQPGT). Residues 156–179 (SSMASSSTRSSQSSQVSAIQPQSQ) show a composition bias toward low complexity. Over residues 180–198 (DDNRVSDIRQMENRRELNV) the composition is skewed to basic and acidic residues. Basic and acidic residues-rich tracts occupy residues 426-441 (HSNEKFEQIPSPDEKL) and 489-505 (DAEKEKDENLSKPEHHP). Phosphoserine is present on Ser436. A compositionally biased stretch (polar residues) spans 506–522 (SITSVNSPFLYSPSKQP). Phosphoserine is present on residues Ser618 and Ser856. Disordered stretches follow at residues 803-864 (RGSL…ASAD), 940-974 (GEAPKEAPPPPRSEPVSTTTKLAKRITQPSLSPAR), and 1005-1024 (KAKSEQSNAKSSSSSIKESK). A compositionally biased stretch (low complexity) spans 826–859 (TLSLKTSTTGLSSHSKSAENNSTQQSTTSPSINS). Over residues 955–974 (VSTTTKLAKRITQPSLSPAR) the composition is skewed to polar residues. The span at 1009–1020 (EQSNAKSSSSSI) shows a compositional bias: low complexity.

Its subcellular location is the cytoplasm. This is an uncharacterized protein from Schizosaccharomyces pombe (strain 972 / ATCC 24843) (Fission yeast).